We begin with the raw amino-acid sequence, 208 residues long: Holliday junction resolvase RecU (208 aa).

Residues Thr87, Asp89, Glu102, and Gln121 each contribute to the Mg(2+) site.

Belongs to the RecU family. Mg(2+) serves as cofactor.

It is found in the cytoplasm. The enzyme catalyses Endonucleolytic cleavage at a junction such as a reciprocal single-stranded crossover between two homologous DNA duplexes (Holliday junction).. Its function is as follows. Endonuclease that resolves Holliday junction intermediates in genetic recombination. Cleaves mobile four-strand junctions by introducing symmetrical nicks in paired strands. Promotes annealing of linear ssDNA with homologous dsDNA. Required for DNA repair, homologous recombination and chromosome segregation. This Staphylococcus aureus (strain MRSA252) protein is Holliday junction resolvase RecU.